The sequence spans 230 residues: Ribulose-phosphate 3-epimerase (230 aa).

A substrate-binding site is contributed by Ser-10. Residues His-35, Asp-37, and His-68 each contribute to the a divalent metal cation site. Asp-37 acts as the Proton acceptor in catalysis. Substrate contacts are provided by residues His-68, Gly-146–Gly-149, Asp-179–Gly-181, and Gly-201–Ser-202. Asp-179 is an a divalent metal cation binding site. The Proton donor role is filled by Asp-179.

The protein belongs to the ribulose-phosphate 3-epimerase family. In terms of assembly, homohexamer. A divalent metal cation is required as a cofactor.

The enzyme catalyses D-ribulose 5-phosphate = D-xylulose 5-phosphate. Its pathway is carbohydrate degradation. Functionally, catalyzes the reversible epimerization of D-ribulose 5-phosphate to D-xylulose 5-phosphate. This chain is Ribulose-phosphate 3-epimerase, found in Synechocystis sp. (strain ATCC 27184 / PCC 6803 / Kazusa).